A 250-amino-acid polypeptide reads, in one-letter code: MEFKVDTHTHTYASGHAYSTLIENAKSAKENGLTMFCSTDHAESMPGAPHYWFFSNQKILPRFLEGVAIVRGVESNILNIEGEIDIPPSVDRNLDWVIASFHEPVFPPANKEAHTEALINVIKSGRVDALGHLGNPNFDFDFEQVLKCAKEHNVAIEINNTTLKGNSRVGSVDRCHEIAQIGKALDVYFTTGSDAHFCHDVGNLELVSELMDNLDIDSNKVITHSAKQFLSFLELRGRLPIAEYDEIRNA.

Positions 8, 10, 16, 41, 74, 102, 132, 194, and 196 each coordinate Zn(2+).

The protein belongs to the PHP family. Requires Zn(2+) as cofactor.

The polypeptide is Probable phosphatase VPA1527 (Vibrio parahaemolyticus serotype O3:K6 (strain RIMD 2210633)).